Here is a 226-residue protein sequence, read N- to C-terminus: UPF0502 protein Gbem_0194 (226 aa).

It belongs to the UPF0502 family.

In Citrifermentans bemidjiense (strain ATCC BAA-1014 / DSM 16622 / JCM 12645 / Bem) (Geobacter bemidjiensis), this protein is UPF0502 protein Gbem_0194.